Here is a 674-residue protein sequence, read N- to C-terminus: MPSYTVTVATGSQWFAGTDDYIYLSLVGSAGCSEKHLLDKPFYNDFERGAVDSYDVTVDEELGEIQLVRIEKRKYWLNDDWYLKYITLKTPHGDYIEFPCYRWITGDVEVVLRDGRAKLARDDQIHILKQHRRKELETRQKQYRWMEWNPGFPLSIDAKCHKDLPRDIQFDSEKGVDFVLNYSKAMENLFINRFMHMFQSSWNDFADFEKIFVKISNTISERVMNHWQEDLMFGYQFLNGCNPVLIRRCTELPEKLPVTTEMVECSLERQLSLEQEVQQGNIFIVDFELLDGIDANKTDPCTLQFLAAPICLLYKNLANKIVPIAIQLNQIPGDENPIFLPSDAKYDWLLAKIWVRSSDFHVHQTITHLLRTHLVSEVFGIAMYRQLPAVHPIFKLLVAHVRFTIAINTKAREQLICECGLFDKANATGGGGHVQMVQRAMKDLTYASLCFPEAIKARGMESKEDIPYYFYRDDGLLVWEAIRTFTAEVVDIYYEGDQVVEEDPELQDFVNDVYVYGMRGRKSSGFPKSVKSREQLSEYLTVVIFTASAQHAAVNFGQYDWCSWIPNAPPTMRAPPPTAKGVVTIEQIVDTLPDRGRSCWHLGAVWALSQFQENELFLGMYPEEHFIEKPVKEAMARFRKNLEAIVSVIAERNKKKQLPYYYLSPDRIPNSVAI.

One can recognise a PLAT domain in the interval 2-118 (PSYTVTVATG…EVVLRDGRAK (117 aa)). Ca(2+) contacts are provided by Gly17, Thr18, Asp19, Asn44, Asp45, Glu47, Asp79, and Asp80. One can recognise a Lipoxygenase domain in the interval 119–674 (LARDDQIHIL…PDRIPNSVAI (556 aa)). Residue Ser272 is modified to Phosphoserine; by MAPKAPK2. Fe cation-binding residues include His368 and His373. Position 524 is a phosphoserine; by PKA (Ser524). Residues His551, Asn555, and Ile674 each coordinate Fe cation.

It belongs to the lipoxygenase family. As to quaternary structure, homodimer. Interacts with ALOX5AP and LTC4S. Interacts with COTL1, the interaction is required for stability and efficient catalytic activity. Interacts with PIK3R1; this interaction bridges ALOX5 with CD40 after CD40 ligation in B cells and leads to the production of reactive oxygen species (ROS). Interacts (via PLAT domain) with DICER1 (via Dicer dsRNA-binding fold domain); this interaction enhances arachidonate 5-lipoxygenase activity and modifies the miRNA precursor processing activity of DICER1. The cofactor is Fe cation. Serine phosphorylation by MAPKAPK2 is stimulated by arachidonic acid. Phosphorylation on Ser-524 by PKA has an inhibitory effect. Phosphorylation on Ser-272 prevents export from the nucleus. Phosphorylation at Ser-524 is stimulated by 8-bromo-3',5'-cyclic AMP or prostaglandin E2.

It is found in the cytoplasm. Its subcellular location is the nucleus matrix. It localises to the nucleus membrane. The protein resides in the perinuclear region. The protein localises to the cytosol. It is found in the nucleus envelope. Its subcellular location is the nucleus intermembrane space. It carries out the reaction (5Z,8Z,11Z,14Z)-eicosatetraenoate + O2 = leukotriene A4 + H2O. The enzyme catalyses 18-HEPE + O2 = (5S)-hydroperoxy-18-hydroxy-(7E,9E,11Z,14Z,16E)-eicosapentaenoate. It catalyses the reaction (18R)-hydroxy-(5Z,8Z,11Z,14Z,16E)-eicosapentaenoate + O2 = (5S)-hydroperoxy-(18R)-hydroxy-(6E,8Z,11Z,14Z,16E)-eicosapentaenoate. The catalysed reaction is (18S)-hydroxy-(5Z,8Z,11Z,14Z,16E)-eicosapentaenoate + O2 = (5S)-hydroperoxy-(18S)-hydroxy-(6E,8Z,11Z,14Z,16E)-eicosapentaenoate. It carries out the reaction (5S)-hydroperoxy-(18S)-hydroxy-(6E,8Z,11Z,14Z,16E)-eicosapentaenoate = (5S,6S)-epoxy-(18S)-hydroxy-(7E,9E,11Z,14Z,16E)-eicosapentaenoate + H2O. The enzyme catalyses (5S)-hydroperoxy-(18R)-hydroxy-(6E,8Z,11Z,14Z,16E)-eicosapentaenoate = (5S,6S)-epoxy-(18R)-hydroxy-(7E,9E,11Z,14Z,16E)-eicosapentaenoate + H2O. It catalyses the reaction (5S)-hydroperoxy-18-hydroxy-(7E,9E,11Z,14Z,16E)-eicosapentaenoate = (5S,6S)-epoxy-18-hydroxy-(7E,9E,11Z,14Z,16E)-eicosapentaenoate + H2O. The catalysed reaction is (5Z,8Z,11Z,14Z)-eicosatetraenoate + O2 = (5S)-hydroperoxy-(6E,8Z,11Z,14Z)-eicosatetraenoate. It carries out the reaction (15S)-hydroxy-(5Z,8Z,11Z,13E)-eicosatetraenoate + O2 = (5S)-hydroperoxy-(15S)-hydroxy-(6E,8Z,11Z,13E)-eicosatetraenoate. The enzyme catalyses (5S)-hydroperoxy-(6E,8Z,11Z,14Z)-eicosatetraenoate = leukotriene A4 + H2O. It catalyses the reaction (5Z,8Z,11Z,14Z)-eicosatetraenoate + O2 = (8S)-hydroperoxy-(5Z,9E,11Z,14Z)-eicosatetraenoate. The catalysed reaction is (5Z,8Z,11Z,14Z)-eicosatetraenoate + O2 = (12S)-hydroperoxy-(5Z,8Z,10E,14Z)-eicosatetraenoate. It carries out the reaction (5Z,8Z)-eicosadienoate + O2 = (5S)-hydroperoxy-(6E,8Z)-eicosadienoate. The enzyme catalyses (12S)-hydroxy-(5Z,8Z,10E,14Z)-eicosatetraenoate + O2 = (5S)-hydroperoxy-(12S)-hydroxy-(6E,8Z,10E,14Z)-eicosatetraenoate. It catalyses the reaction (5Z,8Z,11Z,14Z,17Z)-eicosapentaenoate + O2 = 5-hydroperoxy-(6E,8Z,11Z,14Z,17Z)-eicosapentaenoate. The catalysed reaction is (4Z,7Z,10Z,13Z,16Z,19Z)-docosahexaenoate + O2 = (14S)-hydroperoxy-(4Z,7Z,10Z,12E,16Z,19Z)-docosahexaenoate. It carries out the reaction (4Z,7Z,10Z,13Z,16Z,19Z)-docosahexaenoate + O2 = (7S)-hydroperoxy-(4Z,8E,10Z,13Z,16Z,19Z)-docosahexaenoate. The enzyme catalyses (4Z,7Z,10Z,13Z,16Z,19Z)-docosahexaenoate + O2 = (17S)-hydroperoxy-(4Z,7Z,10Z,13Z,15E,19Z)-docosahexaenoate. It functions in the pathway lipid metabolism; leukotriene A4 biosynthesis. Undergoes a sequential loss of the oxygenase and pseudoperoxidase activities which is dependent on the structural characteristics of the substrate for the reaction, on oxygen concentration and on exposure to phospholipids and calcium. 15-HETE and other 15-mono-hydroxyeicosanoids exhibit the highest inhibitory potencies in their capability of suppressing 5-lipoxygenation of arachidonic acid, whereas the other HETEs, (5S,15S)-dihydroxy-(6E,8Z,11Z,13E)-eicosatetraenoic acid (5,15-diHETE) as well as octadecanoids, are modest or poor inhibitors. The formation of (5S)-hydroperoxy-(15S)-hydroxy-(6E,8Z,11Z,13E)-eicosatetraenoate is strongly stimulated by either hydroperoxypolyenoic fatty acids or arachidonic acid. Arachidonate 5-lipoxygenase and leukotriene A4 synthase activities are allosterically increased by ATP. In terms of biological role, catalyzes the oxygenation of arachidonate ((5Z,8Z,11Z,14Z)-eicosatetraenoate) to 5-hydroperoxyeicosatetraenoate (5-HPETE) followed by the dehydration to 5,6- epoxyeicosatetraenoate (Leukotriene A4/LTA4), the first two steps in the biosynthesis of leukotrienes, which are potent mediators of inflammation. Also catalyzes the oxygenation of arachidonate into 8-hydroperoxyicosatetraenoate (8-HPETE) and 12-hydroperoxyicosatetraenoate (12-HPETE). Displays lipoxin synthase activity being able to convert (15S)-HETE into a conjugate tetraene. Although arachidonate is the preferred substrate, this enzyme can also metabolize oxidized fatty acids derived from arachidonate such as (15S)-HETE, eicosapentaenoate (EPA) such as (18R)- and (18S)-HEPE or docosahexaenoate (DHA) which lead to the formation of specialized pro-resolving mediators (SPM) lipoxin and resolvins E and D respectively, therefore it participates in anti-inflammatory responses. Oxidation of DHA directly inhibits endothelial cell proliferation and sprouting angiogenesis via peroxisome proliferator-activated receptor gamma (PPARgamma). It does not catalyze the oxygenation of linoleic acid and does not convert (5S)-HETE to lipoxin isomers. In addition to inflammatory processes, it participates in dendritic cell migration, wound healing through an antioxidant mechanism based on heme oxygenase-1 (HO-1) regulation expression, monocyte adhesion to the endothelium via ITGAM expression on monocytes. Moreover, it helps establish an adaptive humoral immunity by regulating primary resting B cells and follicular helper T cells and participates in the CD40-induced production of reactive oxygen species (ROS) after CD40 ligation in B cells through interaction with PIK3R1 that bridges ALOX5 with CD40. May also play a role in glucose homeostasis, regulation of insulin secretion and palmitic acid-induced insulin resistance via AMPK. Can regulate bone mineralization and fat cell differentiation increases in induced pluripotent stem cells. The sequence is that of Polyunsaturated fatty acid 5-lipoxygenase from Homo sapiens (Human).